We begin with the raw amino-acid sequence, 313 residues long: PDCD10 and GCKIII kinases-associated protein 1 (313 aa).

Residues 40–89 form a disordered region; that stretch reads RLKGTQNSEVEVPRNALHDGSLSNSESRGSTTGLPHQGPLPQEDSEERPC. Phosphoserine is present on residues Ser-60 and Ser-64. Residues 60–73 show a composition bias toward polar residues; it reads SLSNSESRGSTTGL. Thr-104 is subject to Phosphothreonine. Phosphoserine occurs at positions 107, 237, and 240. Residues 253-286 form a disordered region; it reads YFKEEGPTHPTPAADSGSEREDPHTYNGDREGVV. A compositionally biased stretch (basic and acidic residues) spans 269–285; sequence GSEREDPHTYNGDREGV.

As to quaternary structure, interacts with KEAP1; this interaction prevents the ubiquitination of KEAP1 by TRIM25, thus protecting KEAP1 from degradation. Found in association with PDCD10 and members of the STE20 kinases, such as STK24, STK25 and STK26.

The protein resides in the cell membrane. Functionally, acts as a tumor suppressor. Acts as a tumor suppressor for colorectal cancer cell proliferation by targeting KEAP1/USP17/ELK1/CDK6 axis. The sequence is that of PDCD10 and GCKIII kinases-associated protein 1 from Mus musculus (Mouse).